The following is a 263-amino-acid chain: E3 ubiquitin-protein ligase SINA-like 8 (263 aa).

An RING-type; degenerate zinc finger spans residues 35-71; the sequence is CPICCEGLTCPIFQCENGHLACSSCCPKLRNKCPACP. Residues 75-261 are SBD; it reads ILESILVTCP…IKLSIVETSN (187 aa). The segment at 78-136 adopts an SIAH-type zinc-finger fold; sequence SILVTCPNDMFGCTESFLYGKKSTHEEECIFSLCSCPSLDCEYSGRYEDLYDHYKLTHI. 8 residues coordinate Zn(2+): C83, C90, H102, C106, C113, C118, H130, and H135.

Belongs to the SINA (Seven in absentia) family.

The enzyme catalyses S-ubiquitinyl-[E2 ubiquitin-conjugating enzyme]-L-cysteine + [acceptor protein]-L-lysine = [E2 ubiquitin-conjugating enzyme]-L-cysteine + N(6)-ubiquitinyl-[acceptor protein]-L-lysine.. The protein operates within protein modification; protein ubiquitination. Functionally, E3 ubiquitin-protein ligase that mediates ubiquitination and subsequent proteasomal degradation of target proteins. E3 ubiquitin ligases accept ubiquitin from an E2 ubiquitin-conjugating enzyme in the form of a thioester and then directly transfers the ubiquitin to targeted substrates. It probably triggers the ubiquitin-mediated degradation of different substrates. In Arabidopsis thaliana (Mouse-ear cress), this protein is E3 ubiquitin-protein ligase SINA-like 8.